The chain runs to 405 residues: Argininosuccinate synthase (405 aa).

ATP is bound by residues Ala10–Ser18 and Ala37. L-citrulline-binding residues include Tyr88 and Ser93. Gly118 is a binding site for ATP. Residues Thr120, Asn124, and Asp125 each coordinate L-aspartate. Residue Asn124 participates in L-citrulline binding. The L-citrulline site is built by Arg128, Ser179, Ser188, Glu264, and Tyr276.

The protein belongs to the argininosuccinate synthase family. Type 1 subfamily. Homotetramer.

It localises to the cytoplasm. The catalysed reaction is L-citrulline + L-aspartate + ATP = 2-(N(omega)-L-arginino)succinate + AMP + diphosphate + H(+). It functions in the pathway amino-acid biosynthesis; L-arginine biosynthesis; L-arginine from L-ornithine and carbamoyl phosphate: step 2/3. This is Argininosuccinate synthase from Pseudomonas syringae pv. tomato (strain ATCC BAA-871 / DC3000).